The following is a 977-amino-acid chain: MKGLSGSRSHHHGVTCDSACDSLSHHSDRKPYLLSPVEHHPADHPYYTQRNSFQAECVGPFSDPLASSTFPRRHYTSQQELKDECALVPRTLATKANRIPANLLDQFERQLPLSRDGYHTLQYKRTAVEHRSDSPGRIRHLVHSVQKLFTKSHSLEGPSKGSVNGGKASPDEAQAARYGKRSKSKERRAEPKARPSTSPGWWSSDDNLDGDMCIYHAPSGVMTMGRCPDRSASQYFLEAYNTISEQAVKASRSNNDVKCSTCANLPVSLDTPLLKKSAWSSTLTVSRAREVYQKASVNMDQAMVKSESCQQERSCQYLQVPQDEWTGYTPRGKDDEIPCRRMRSGSYIKAMGDEDSGDSDTSPKPSPKVAARRESYLKATQPSLTELTTLKISNEHSPKLQIRSHSYLRAVSEVSINRSLDSLDPAGLLTSPKFRSRNESYMRAMSTISQVSEMEVNGQFESVCESVFSELESQAVEALDLPMPGCFRMRSHSYVRAIEKGCSQDDECVSLRSSSPPRTTTTVRTIQSSTVSSCITTYKKTPPPVPPRTTTKPFISITAQSSTESAQDAYMDGQGQRGDIISQSGLSNSTESLDSMKALTAAIEAANAQIHGPASQHMGNNTATVTTTTTIATVTTEDRKKDHFKKNRCLSIGIQVDDAEEPDKTGENKAPSKFQSVGVQVEEEKCFRRFTRSNSVTTAVQADLDFHDNLENSLESIEDNSCPGPMARQFSRDASTSTVSIQGSGNHYHACAADDDFDTDFDPSILPPPDPWIDSITEDPLEAVQRSVCHRDGHWFLKLLQAERDRMEGWCQQMEREERENNLPEDILGKIRTAVGSAQLLMAQKFYQFRELCEENLNPNAHPRPTSQDLAGFWDMLQLSIENISMKFDELHQLKANNWKQMDPLDKKERRAPPPVPKKPAKGPAPLIRERSLESSQRQEARKRLMAAKRAASVRQNSATESAESIEIYIPEAQTRL.

Disordered stretches follow at residues 150–203 (TKSH…GWWS) and 349–371 (KAMG…KVAA). 14 positions are modified to phosphoserine: S169, S356, S359, S362, S366, S383, S412, S415, S419, S422, S431, S503, S510, and S562. Phosphothreonine is present on T563. Phosphoserine occurs at positions 565 and 589. Position 590 is a phosphothreonine (T590). Residues S592 and S595 each carry the phosphoserine modification. 2 interaction with DYL2 regions span residues 650–661 (LSIGIQVDDAEE) and 672–683 (SKFQSVGVQVEE). The disordered stretch occupies residues 899-965 (WKQMDPLDKK…QNSATESAES (67 aa)). Composition is skewed to basic and acidic residues over residues 903 to 912 (DPLDKKERRA) and 928 to 943 (IRER…EARK). S932 is modified (phosphoserine). Polar residues predominate over residues 954 to 963 (VRQNSATESA). Residues 975 to 977 (TRL) carry the PDZ-binding motif.

It belongs to the SAPAP family. In terms of assembly, interacts with guanylate kinase-like domain of DLG1, DLG2, DLG3, DLG4 and AIP1. Interacts with the PDZ domain of SHANK1, SHANK2 and SHANK3. Found in a complex with DLG4 and SHANK1, SHANK2 or SHANK3. Found in a complex with DLG4 and BEGAIN. Interacts with DYL2 and LRFN1. Interacts with MPP2 (via the SH3-Guanylate kinase-like sub-module). Post-translationally, ubiquitinated by TRIM3; leading to proteasomal degradation. Expressed in brain.

It localises to the cell membrane. It is found in the postsynaptic density. The protein localises to the synapse. Its function is as follows. Part of the postsynaptic scaffold in neuronal cells. In Homo sapiens (Human), this protein is Disks large-associated protein 1 (DLGAP1).